The primary structure comprises 205 residues: Spermatogenesis-associated protein 24 (205 aa).

Positions 17-166 form a coiled coil; it reads LAFDQLRDVI…QQRQSFRNHM (150 aa). Positions 138–185 are required for interaction with CBX5 and TBPL1; that stretch reads EDILNGKENEIKELQQVISQQRQSFRNHMSDFRIQKQQETYMAQVLDQ. Residues 182–205 form a disordered region; the sequence is VLDQKHKKTSGTRRARSRQCSREK. A compositionally biased stretch (basic residues) spans 186–205; that stretch reads KHKKTSGTRRARSRQCSREK.

It belongs to the SPATA24 family. In terms of assembly, homodimer. Interacts with CBX3, CBX5, GMNN, GTF2B, TBPL1 and the polycomb proteins PHCF2, RNF2 and SCMH1 but not with CBX1 or PCGF2. As to expression, highly expressed in the testis and is mainly localized in the spermatids. Also expressed in the lung, heart, spleen and epididymis.

The protein localises to the cytoplasm. It is found in the nucleus. The protein resides in the nucleolus. It localises to the nucleoplasm. Its function is as follows. Binds DNA with high affinity but does not bind to TATA boxes. Synergises with GMNN and TBP in activation of TATA box-containing promoters and with GMNN and TBPL1 in activation of the NF1 TATA-less promoter. May play a role in cytoplasm movement and removal during spermiogenesis. The polypeptide is Spermatogenesis-associated protein 24 (Spata24) (Rattus norvegicus (Rat)).